Consider the following 311-residue polypeptide: tRNA dimethylallyltransferase (311 aa).

9–16 (GPTAVGKT) provides a ligand contact to ATP. Residue 11 to 16 (TAVGKT) participates in substrate binding. The segment at 34–37 (DSMQ) is interaction with substrate tRNA.

Belongs to the IPP transferase family. Monomer. Mg(2+) is required as a cofactor.

It catalyses the reaction adenosine(37) in tRNA + dimethylallyl diphosphate = N(6)-dimethylallyladenosine(37) in tRNA + diphosphate. Catalyzes the transfer of a dimethylallyl group onto the adenine at position 37 in tRNAs that read codons beginning with uridine, leading to the formation of N6-(dimethylallyl)adenosine (i(6)A). This chain is tRNA dimethylallyltransferase, found in Clostridium botulinum (strain Hall / ATCC 3502 / NCTC 13319 / Type A).